The following is a 363-amino-acid chain: tRNA N6-adenosine threonylcarbamoyltransferase (363 aa).

Positions 121 and 125 each coordinate Fe cation. Substrate contacts are provided by residues 143 to 147 (LASGG), D176, G189, and N287. D315 serves as a coordination point for Fe cation.

It belongs to the KAE1 / TsaD family. The cofactor is Fe(2+).

It localises to the cytoplasm. It carries out the reaction L-threonylcarbamoyladenylate + adenosine(37) in tRNA = N(6)-L-threonylcarbamoyladenosine(37) in tRNA + AMP + H(+). In terms of biological role, required for the formation of a threonylcarbamoyl group on adenosine at position 37 (t(6)A37) in tRNAs that read codons beginning with adenine. Is involved in the transfer of the threonylcarbamoyl moiety of threonylcarbamoyl-AMP (TC-AMP) to the N6 group of A37, together with TsaE and TsaB. TsaD likely plays a direct catalytic role in this reaction. The polypeptide is tRNA N6-adenosine threonylcarbamoyltransferase (Rhodopseudomonas palustris (strain HaA2)).